The sequence spans 380 residues: Alpha-N-acetylneuraminate alpha-2,8-sialyltransferase ST8SIA3 (380 aa).

Residues M1–M17 are Cytoplasmic-facing. The chain crosses the membrane as a helical; Signal-anchor for type II membrane protein span at residues L18–L33. Over K34–A380 the chain is Lumenal. N93 and N113 each carry an N-linked (GlcNAc...) asparagine glycan. Intrachain disulfides connect C162–C313 and C176–C379. Positions 167 and 190 each coordinate CMP-N-acetyl-beta-neuraminate. The N-linked (GlcNAc...) asparagine glycan is linked to N206. CMP-N-acetyl-beta-neuraminate is bound by residues S300, T301, G302, W322, Y336, and H337. Catalysis depends on H354, which acts as the Proton donor/acceptor.

The protein belongs to the glycosyltransferase 29 family. In terms of assembly, homodimer. As to expression, expressed in neurons in brain with higher expression in the striatum than in the hippocampus, cortex, and cerebellum (at protein level). Expressed in testes.

It localises to the golgi apparatus membrane. It catalyses the reaction a ganglioside GM3 (d18:1(4E)) + CMP-N-acetyl-beta-neuraminate = a ganglioside GD3 (d18:1(4E)) + CMP + H(+). The enzyme catalyses a ganglioside GM3 + CMP-N-acetyl-beta-neuraminate = a ganglioside GD3 + CMP + H(+). It carries out the reaction an N-acetyl-alpha-neuraminyl-(2-&gt;3)-beta-D-galactosyl derivative + CMP-N-acetyl-beta-neuraminate = an N-acetyl-alpha-neuraminyl-(2-&gt;8)-N-acetyl-alpha-neuraminyl-(2-&gt;3)-beta-D-galactosyl derivative + CMP + H(+). The catalysed reaction is an N-acetyl-alpha-neuraminyl-(2-&gt;3)-beta-D-galactosyl-(1-&gt;4)-N-acetyl-beta-D-glucosaminyl derivative + CMP-N-acetyl-beta-neuraminate = an alpha-Neu5Ac-(2-&gt;8)-alpha-Neu5Ac-(2-&gt;3)-beta-D-Gal-(1-&gt;4)-beta-D-GlcNAc derivative + CMP + H(+). It participates in protein modification; protein glycosylation. Its function is as follows. Catalyzes the transfer of sialic acid from a CMP-linked sialic acid donor onto a terminal alpha-2,3-, alpha-2,6-, or alpha-2,8-linked sialic acid of an acceptor, such as N-linked oligosaccharides of glycoproteins and glycolipids through alpha-2,8-linkages. Forms oligosialic and polysialic acid on various sialylated N-acetyllactosamine oligosaccharides of glycoproteins, including FETUB N-glycans, a2-HS-glycoprotein (AHSG) and alpha 2,3-sialylated glycosphingolipids, such as alpha 2,3-sialylparagloboside and ganglioside GM3 and to a lesser extent NCAM1 N-glycans. However, it is much more specific to N-linked oligosaccharides of glycoproteins than glycosphingolipids. 2,3-sialylparagloboside served as the best acceptor substrate among the glycolipids. alpha-Neu5Ac-(2-&gt;8)-alpha-Neu5Ac-(2-&gt;3)-beta-D-Gal-(1-&gt;4)-6S-D-GlcNAc and monosialyl and disialyl N-acetyllactosamines are the best acceptor substrates among glycoproteins. May play critical role in the striatum by mediating the formation of disialylated and trisialylated terminal glycotopes on N- and O-glycans of specific striatal proteins, regulating their distribution in lipid rafts, affecting their interaction with other binding partners, and subsequently modulating striatal functions. This is Alpha-N-acetylneuraminate alpha-2,8-sialyltransferase ST8SIA3 from Mus musculus (Mouse).